The following is a 1405-amino-acid chain: MNQEVMNLFNQQAQPQSFDQIKISISSPEKILSWSYGEIKKPETINYRTFKPERDGLFCARIFGPIKDYECLCGKYKRMKYKGVICEKCGVEVTLARVRRDRMGHIELAAPVAHIWFLKSLPSRIGLLLDMALKDLERILYFESYVVIEPGLTPLKERQLLSEEEYLRAQEEYGEDSFTAMIGAEAIRRILQELDLEGIATALKEEIATTTSELKPKKLMKRLKIIEAFQLSGNKPEWMILTVVPVIPPDLRPLVPLDGGRFATSDLNDLYRRVINRNNRLKRLIELRAPDIIIRNEKRMLQEAVDALFDNGRRGRVITGANKRPLKSLADMLKGKQGRFRQNLLGKRVDYSGRSVIVVGPELKLHQCGLPKKMALELFKPFIYARLDAKGFSATVKQAKKLVEKEKPEVWDILDEVIREHPVMLNRAPTLHRLGIQAFEPKLIEGKAIQLHPLVCAAFNADFDGDQMAVHVPLSLEAQLEARVLMMSTNNILHPANGQPIIVPSQDIVLGLYYLSIVADGAVGEHKADDKNNPMQGVFGDIGQLEHALAAKTVSLHSKIKWRWRGLGPDGEPVSKIYDTTPGRVILSGVLPLHPKVPFDVVNKLMTKKEISAMIDTVYRHCGQKESVIFCDRIMALGFSHAFRAGISFGKDDMVVPENKWSIVDDTRALVKDYEQQYNDGLITQGEKYNKVVDAWAKCSDKLAAEMMGRISAVQKDDKGADKQVNSIYMMSHSGARGSPAQMKQLAAMRGLMAKPSGEIIETPIISNFKEGLDVLEYFNSTHGARKGLADTALKTANSGYLTRRLVDVAQDAVIRETDCGTTNGIKMRAIIDAGQVVAPLAIRILGRATAEDLVAQDGTVIVKTGETIEERHLPAINAAGIQEVKIRSVLVCQTKSGVCATCYGRDLARGTPVNMGEAVGVIAAQSIGEPGTQLTMRTFHIGGAAQIADSSFIESSFEGTIKIRNRSLAKNSDGDLIATGRSVAVVIVGPDGTERAVHRLQYGAKVRVDEGDTIKRGQRIAEWDPYTRPIVAEVDGIVGYEDLYDGQSITETTDESTGIAKRVVIDWRGSARTSDLKPAMLVLDQDGKPVKLARGSDARYFLPVDAIIGLDPGAKVKAGDVLARVSTESAKTRDITGGLPRVAELFEARRPKDAAIIAEKSGTIQFGRDYKNKRRLTLTPHDGSEAVEYLIPKGKHIHLQDGDVVELGDYIVDGNPAPHDILAIKGVEELAAYLVNEIQEVYRLQGVSINDKHIEVIVRQMLQKVEITDGGDSDILTGDQIDRTELAEYNEKLLAEGKKPIQGVPVLLGITKASLQTKSFISAASFQETTRVLTEAAVNGKVDTLEGLKENVIVGSLIPAGTGSLAADIRSIARRRDSLILQQRSAENAANAAELSELPPAAAE.

Positions 71, 73, 86, and 89 each coordinate Zn(2+). Mg(2+) is bound by residues aspartate 462, aspartate 464, and aspartate 466. Zn(2+)-binding residues include cysteine 820, cysteine 893, cysteine 900, and cysteine 903.

Belongs to the RNA polymerase beta' chain family. In terms of assembly, the RNAP catalytic core consists of 2 alpha, 1 beta, 1 beta' and 1 omega subunit. When a sigma factor is associated with the core the holoenzyme is formed, which can initiate transcription. The cofactor is Mg(2+). It depends on Zn(2+) as a cofactor.

The enzyme catalyses RNA(n) + a ribonucleoside 5'-triphosphate = RNA(n+1) + diphosphate. DNA-dependent RNA polymerase catalyzes the transcription of DNA into RNA using the four ribonucleoside triphosphates as substrates. In Methylorubrum populi (strain ATCC BAA-705 / NCIMB 13946 / BJ001) (Methylobacterium populi), this protein is DNA-directed RNA polymerase subunit beta'.